Here is a 274-residue protein sequence, read N- to C-terminus: Phosphatidylglycerol--prolipoprotein diacylglyceryl transferase (274 aa).

Helical transmembrane passes span 22 to 42, 61 to 81, 96 to 116, 125 to 145, 177 to 197, 204 to 224, and 238 to 258; these read LSVR…MWLA, LLFY…VLFY, IWTG…AMVW, FFTV…VGRI, SQLY…NLFW, GAIS…VEFV, and ISMG…MIWV. Arginine 144 serves as a coordination point for a 1,2-diacyl-sn-glycero-3-phospho-(1'-sn-glycerol).

This sequence belongs to the Lgt family.

The protein localises to the cell inner membrane. It catalyses the reaction L-cysteinyl-[prolipoprotein] + a 1,2-diacyl-sn-glycero-3-phospho-(1'-sn-glycerol) = an S-1,2-diacyl-sn-glyceryl-L-cysteinyl-[prolipoprotein] + sn-glycerol 1-phosphate + H(+). Its pathway is protein modification; lipoprotein biosynthesis (diacylglyceryl transfer). In terms of biological role, catalyzes the transfer of the diacylglyceryl group from phosphatidylglycerol to the sulfhydryl group of the N-terminal cysteine of a prolipoprotein, the first step in the formation of mature lipoproteins. This Aeromonas hydrophila subsp. hydrophila (strain ATCC 7966 / DSM 30187 / BCRC 13018 / CCUG 14551 / JCM 1027 / KCTC 2358 / NCIMB 9240 / NCTC 8049) protein is Phosphatidylglycerol--prolipoprotein diacylglyceryl transferase.